We begin with the raw amino-acid sequence, 37 residues long: Serrulin (37 aa).

The interval 16–37 (FGGGGIGGGGFGGGYGGGKIKG) is disordered. Lys-36 is subject to Lysine amide.

Expressed in hemocytes (at protein level).

The protein resides in the secreted. Its function is as follows. Antimicrobial protein with activity against Gram-positive and Gram-negative bacteria, filamentous fungus, and yeast. Was tested against Micrococcus luteus A270 (MIC=0.5-1 uM), Echerichia coli SBS 363 (MIC=9-16 uM), Pseudomonas aeruginosa (MIC=0.01-0.3 uM), Aspergillus niger (MIC=3-6 uM), and Candida albicans MDM8 (MIC=1.5-3 uM). Has no hemolytic activity against human erythrocytes. The chain is Serrulin from Tityus serrulatus (Brazilian scorpion).